Reading from the N-terminus, the 433-residue chain is Serine--tRNA ligase (433 aa).

235–237 (TSE) serves as a coordination point for L-serine. ATP is bound at residue 266-268 (RSE). Glutamate 289 provides a ligand contact to L-serine. 353 to 356 (EISS) provides a ligand contact to ATP. Serine 388 contacts L-serine.

Belongs to the class-II aminoacyl-tRNA synthetase family. Type-1 seryl-tRNA synthetase subfamily. In terms of assembly, homodimer. The tRNA molecule binds across the dimer.

The protein localises to the cytoplasm. The catalysed reaction is tRNA(Ser) + L-serine + ATP = L-seryl-tRNA(Ser) + AMP + diphosphate + H(+). It catalyses the reaction tRNA(Sec) + L-serine + ATP = L-seryl-tRNA(Sec) + AMP + diphosphate + H(+). It participates in aminoacyl-tRNA biosynthesis; selenocysteinyl-tRNA(Sec) biosynthesis; L-seryl-tRNA(Sec) from L-serine and tRNA(Sec): step 1/1. Catalyzes the attachment of serine to tRNA(Ser). Is also able to aminoacylate tRNA(Sec) with serine, to form the misacylated tRNA L-seryl-tRNA(Sec), which will be further converted into selenocysteinyl-tRNA(Sec). The protein is Serine--tRNA ligase of Burkholderia thailandensis (strain ATCC 700388 / DSM 13276 / CCUG 48851 / CIP 106301 / E264).